We begin with the raw amino-acid sequence, 1712 residues long: U3 small nucleolar RNA-associated protein 10 (1712 aa).

HEAT repeat units lie at residues 164–202 (EELVLRILPVLNSCMQAKYGAETVAACYSIVTVLAGRGE), 490–528 (TCDFQNLIPYLLHALADPSAPVRRAAAACTVALSEASGS), 564–605 (TLLS…PKHG), 987–1025 (TQTISRVVPQLAASLRAKHKNFLTGVSDLLLSFTAAFEH), 1236–1275 (VISLISFLPSVEKVLQQSQHTDAKIISVGCIDRIVERFGK), 1605–1646 (EEVT…DSAA), and 1667–1705 (LGLLPEMLPFISELREDDDEMVERETQRWISQVEGVLGE).

It belongs to the HEATR1/UTP10 family. As to quaternary structure, component of the ribosomal small subunit (SSU) processome.

It localises to the nucleus. The protein resides in the nucleolus. Involved in nucleolar processing of pre-18S ribosomal RNA. Involved in ribosome biosynthesis. The polypeptide is U3 small nucleolar RNA-associated protein 10 (Phaeosphaeria nodorum (strain SN15 / ATCC MYA-4574 / FGSC 10173) (Glume blotch fungus)).